Here is a 587-residue protein sequence, read N- to C-terminus: Protein NRT1/ PTR FAMILY 2.9 (587 aa).

Helical transmembrane passes span 35–55 (FEKL…TTVF), 65–85 (VVNI…FLCD), 94–114 (LSFA…TAVI), 135–155 (IGQI…AGGI), 181–201 (FFNW…TLIV), 209–229 (WSIG…IFFA), 325–345 (CVIR…AYIQ), 368–388 (IPAG…IPIY), 412–432 (VGAG…VEQY), 457–477 (GMWL…AGVG), 493–513 (FAGS…TFLL), and 540–560 (YFYF…LLVS).

The protein belongs to the major facilitator superfamily. Proton-dependent oligopeptide transporter (POT/PTR) (TC 2.A.17) family. In terms of tissue distribution, expressed in roots, stems and major veins of the leaves. Detected in the companion cells of the root phloem.

The protein localises to the cell membrane. Its function is as follows. Low-affinity nitrate transporter facilitating nitrate loading into root phloem. Not involved in dipeptides transport, but has a weak glucosinolate transport activity. This is Protein NRT1/ PTR FAMILY 2.9 (NPF2.9) from Arabidopsis thaliana (Mouse-ear cress).